The chain runs to 444 residues: Light-independent protochlorophyllide reductase subunit N (444 aa).

[4Fe-4S] cluster contacts are provided by Cys-36, Cys-61, and Cys-118.

Belongs to the BchN/ChlN family. As to quaternary structure, protochlorophyllide reductase is composed of three subunits; BchL, BchN and BchB. Forms a heterotetramer of two BchB and two BchN subunits. Requires [4Fe-4S] cluster as cofactor.

It catalyses the reaction chlorophyllide a + oxidized 2[4Fe-4S]-[ferredoxin] + 2 ADP + 2 phosphate = protochlorophyllide a + reduced 2[4Fe-4S]-[ferredoxin] + 2 ATP + 2 H2O. It participates in porphyrin-containing compound metabolism; bacteriochlorophyll biosynthesis (light-independent). In terms of biological role, component of the dark-operative protochlorophyllide reductase (DPOR) that uses Mg-ATP and reduced ferredoxin to reduce ring D of protochlorophyllide (Pchlide) to form chlorophyllide a (Chlide). This reaction is light-independent. The NB-protein (BchN-BchB) is the catalytic component of the complex. The sequence is that of Light-independent protochlorophyllide reductase subunit N from Chloroflexus aurantiacus (strain ATCC 29366 / DSM 635 / J-10-fl).